Reading from the N-terminus, the 632-residue chain is Polyadenylate-binding protein, cytoplasmic and nuclear (632 aa).

Polar residues predominate over residues 1–11 (MSAADANQLQE). The interval 1–43 (MSAADANQLQESLEKLNLDSAPAAAEEEAVAAESAPAGEEGAD) is disordered. The span at 31-43 (AAESAPAGEEGAD) shows a compositional bias: low complexity. 4 RRM domains span residues 52–130 (ASLY…WSQR), 140–217 (GNIF…KHIS), 233–310 (TNIY…RAQK), and 336–413 (VNLF…LAQR). The 82-residue stretch at 534-615 (QQRDLAAIIA…ALTAFEEYKN (82 aa)) folds into the PABC domain.

Belongs to the polyadenylate-binding protein type-1 family.

The protein localises to the cytoplasm. Its subcellular location is the nucleus. Its function is as follows. Binds the poly(A) tail of mRNA. Appears to be an important mediator of the multiple roles of the poly(A) tail in mRNA biogenesis, stability and translation. In the nucleus, involved in both mRNA cleavage and polyadenylation. Is also required for efficient mRNA export to the cytoplasm. Acts in concert with a poly(A)-specific nuclease (PAN) to affect poly(A) tail shortening, which may occur concomitantly with either nucleocytoplasmic mRNA transport or translational initiation. In the cytoplasm, stimulates translation initiation and regulates mRNA decay through translation termination-coupled poly(A) shortening, probably mediated by PAN. In Scheffersomyces stipitis (strain ATCC 58785 / CBS 6054 / NBRC 10063 / NRRL Y-11545) (Yeast), this protein is Polyadenylate-binding protein, cytoplasmic and nuclear (PAB1).